A 361-amino-acid polypeptide reads, in one-letter code: Queuine tRNA-ribosyltransferase (361 aa).

Residue Asp-92 is the Proton acceptor of the active site. Substrate contacts are provided by residues 92 to 96, Asp-146, Gln-189, and Gly-216; that span reads DSGGF. The tract at residues 247–253 is RNA binding; sequence GVGKPAD. The active-site Nucleophile is the Asp-266. The RNA binding; important for wobble base 34 recognition stretch occupies residues 271-275; sequence TRSGR. Positions 304, 306, 309, and 335 each coordinate Zn(2+).

Belongs to the queuine tRNA-ribosyltransferase family. As to quaternary structure, homodimer. Within each dimer, one monomer is responsible for RNA recognition and catalysis, while the other monomer binds to the replacement base PreQ1. The cofactor is Zn(2+).

It carries out the reaction 7-aminomethyl-7-carbaguanine + guanosine(34) in tRNA = 7-aminomethyl-7-carbaguanosine(34) in tRNA + guanine. The protein operates within tRNA modification; tRNA-queuosine biosynthesis. In terms of biological role, catalyzes the base-exchange of a guanine (G) residue with the queuine precursor 7-aminomethyl-7-deazaguanine (PreQ1) at position 34 (anticodon wobble position) in tRNAs with GU(N) anticodons (tRNA-Asp, -Asn, -His and -Tyr). Catalysis occurs through a double-displacement mechanism. The nucleophile active site attacks the C1' of nucleotide 34 to detach the guanine base from the RNA, forming a covalent enzyme-RNA intermediate. The proton acceptor active site deprotonates the incoming PreQ1, allowing a nucleophilic attack on the C1' of the ribose to form the product. After dissociation, two additional enzymatic reactions on the tRNA convert PreQ1 to queuine (Q), resulting in the hypermodified nucleoside queuosine (7-(((4,5-cis-dihydroxy-2-cyclopenten-1-yl)amino)methyl)-7-deazaguanosine). This chain is Queuine tRNA-ribosyltransferase, found in Rickettsia peacockii (strain Rustic).